A 178-amino-acid polypeptide reads, in one-letter code: Interleukin-10 (178 aa).

An N-terminal signal peptide occupies residues 1–18 (MHSSALLCCLVLLTGVRA). Cystine bridges form between Cys30–Cys126 and Cys80–Cys132. Asn134 carries N-linked (GlcNAc...) asparagine glycosylation.

This sequence belongs to the IL-10 family. In terms of assembly, homodimer. Interacts with IL10RA and IL10RB. As to expression, produced by a variety of cell lines, including T-cells, macrophages, mast cells and other cell types.

The protein localises to the secreted. In terms of biological role, major immune regulatory cytokine that acts on many cells of the immune system where it has profound anti-inflammatory functions, limiting excessive tissue disruption caused by inflammation. Mechanistically, IL10 binds to its heterotetrameric receptor comprising IL10RA and IL10RB leading to JAK1 and STAT2-mediated phosphorylation of STAT3. In turn, STAT3 translocates to the nucleus where it drives expression of anti-inflammatory mediators. Targets antigen-presenting cells (APCs) such as macrophages and monocytes and inhibits their release of pro-inflammatory cytokines including granulocyte-macrophage colony-stimulating factor /GM-CSF, granulocyte colony-stimulating factor/G-CSF, IL-1 alpha, IL-1 beta, IL-6, IL-8 and TNF-alpha. Also interferes with antigen presentation by reducing the expression of MHC-class II and co-stimulatory molecules, thereby inhibiting their ability to induce T cell activation. In addition, controls the inflammatory response of macrophages by reprogramming essential metabolic pathways including mTOR signaling. The chain is Interleukin-10 (IL10) from Homo sapiens (Human).